The chain runs to 225 residues: Ribosomal RNA small subunit methyltransferase G (225 aa).

Residues Gly69, 119-120 (AE), and Arg136 contribute to the S-adenosyl-L-methionine site.

The protein belongs to the methyltransferase superfamily. RNA methyltransferase RsmG family.

It is found in the cytoplasm. Functionally, specifically methylates the N7 position of a guanine in 16S rRNA. The protein is Ribosomal RNA small subunit methyltransferase G of Pseudothermotoga lettingae (strain ATCC BAA-301 / DSM 14385 / NBRC 107922 / TMO) (Thermotoga lettingae).